Consider the following 286-residue polypeptide: 3-amino-tetrahydro-pyrrolizinone reductase (286 aa).

Residue Tyr-146 is the Proton acceptor of the active site.

This sequence belongs to the short-chain dehydrogenases/reductases (SDR) family.

It catalyses the reaction 3-amino-5,6,7,7a-tetrahydro-1H-pyrrolizin-1-one + AH2 = 3-amino-tetrahydro-1H-pyrrolizin-1-ol + A. In terms of biological role, involved in the biosynthetic pathway of pyrrolizwilline, a pyrrolizidine alkaloid. Catalyzes the reduction of 3-amino-tetrahydro-pyrrolizinone to 3-amino-tetrahydro-pyrrolizinol. The polypeptide is 3-amino-tetrahydro-pyrrolizinone reductase (xhpD) (Xenorhabdus hominickii).